Reading from the N-terminus, the 456-residue chain is Hydroxyproline dehydrogenase (456 aa).

Residues K310 and K320 each carry the N6-acetyllysine modification.

The protein belongs to the proline oxidase family. FAD serves as cofactor.

It catalyses the reaction trans-4-hydroxy-L-proline + a quinone = (3R,5S)-1-pyrroline-3-hydroxy-5-carboxylate + a quinol + H(+). It carries out the reaction L-proline + a quinone = (S)-1-pyrroline-5-carboxylate + a quinol + H(+). Dehydrogenase that converts trans-4-L-hydroxyproline to delta-1-pyrroline-3-hydroxy-5-carboxylate (Hyp) using ubiquinone-10 as the terminal electron acceptor. Can also use proline as a substrate but with a very much lower efficiency. Does not react with other diastereomers of Hyp: trans-4-D-hydroxyproline and cis-4-L-hydroxyproline. Ubiquininone analogs such as menadione, duroquinone and ubiquinone-1 react more efficiently than oxygen as the terminal electron acceptor during catalysis. The chain is Hydroxyproline dehydrogenase from Rattus norvegicus (Rat).